Consider the following 400-residue polypeptide: Cytohesin-2 (400 aa).

The stretch at Asp-10–Met-67 forms a coiled coil. In terms of domain architecture, SEC7 spans Phe-72–Asn-201. Residues Asn-259–Ser-376 form the PH domain. A 1,2-diacyl-sn-glycero-3-phospho-(1D-myo-inositol-3,4,5-trisphosphate)-binding positions include Lys-268–Thr-276, Arg-280, Tyr-291, Arg-301, Lys-339, Asn-350, and His-351. The segment at Arg-387–Lys-395 is C-terminal autoinhibitory region.

Heteromer. Composed of TAMALIN, CYTH2 and at least one GRM1. Interacts with ARRB1. Interacts with ARL4D; the interaction is direct. Directly interacts with CCDC120 through the coiled coil domain; this interaction stabilizes CCDC120, possibly by preventing its ubiquitination, and is required for neurite growth in a neuroblastoma cell line. Interacts with FRMD4A. Interacts (via N-terminal domain) with INAVA (via N-terminal domain). As to expression, present in all tissues tested, with highest protein levels in brain and adrenal.

It localises to the cell membrane. Its subcellular location is the cytoplasm. It is found in the cell projection. The protein resides in the growth cone. The protein localises to the cell junction. It localises to the tight junction. Its subcellular location is the adherens junction. Its function is as follows. Acts as a guanine-nucleotide exchange factor (GEF). Promotes guanine-nucleotide exchange on ARF1, ARF3 and ARF6. Activates ARF factors through replacement of GDP with GTP. The cell membrane form, in association with ARL4 proteins, recruits ARF6 to the plasma membrane. Involved in neurite growth. This Mus musculus (Mouse) protein is Cytohesin-2 (Cyth2).